The sequence spans 162 residues: NADH-quinone oxidoreductase subunit I (162 aa).

2 4Fe-4S ferredoxin-type domains span residues 52–82 (LRRY…IEAG) and 93–122 (VRYD…EGPN). Residues C62, C65, C68, C72, C102, C105, C108, and C112 each contribute to the [4Fe-4S] cluster site.

It belongs to the complex I 23 kDa subunit family. In terms of assembly, NDH-1 is composed of 14 different subunits. Subunits NuoA, H, J, K, L, M, N constitute the membrane sector of the complex. Requires [4Fe-4S] cluster as cofactor.

It localises to the cell inner membrane. The catalysed reaction is a quinone + NADH + 5 H(+)(in) = a quinol + NAD(+) + 4 H(+)(out). NDH-1 shuttles electrons from NADH, via FMN and iron-sulfur (Fe-S) centers, to quinones in the respiratory chain. The immediate electron acceptor for the enzyme in this species is believed to be ubiquinone. Couples the redox reaction to proton translocation (for every two electrons transferred, four hydrogen ions are translocated across the cytoplasmic membrane), and thus conserves the redox energy in a proton gradient. In Bradyrhizobium sp. (strain ORS 278), this protein is NADH-quinone oxidoreductase subunit I.